The following is a 363-amino-acid chain: Pyrimidine monooxygenase RutA (363 aa).

Residues 49-50 (IK), N115, E124, 140-141 (RY), and S190 each bind FMN.

The protein belongs to the NtaA/SnaA/DszA monooxygenase family. RutA subfamily.

It catalyses the reaction uracil + FMNH2 + NADH + O2 = (Z)-3-ureidoacrylate + FMN + NAD(+) + H2O + H(+). It carries out the reaction thymine + FMNH2 + NADH + O2 = (Z)-2-methylureidoacrylate + FMN + NAD(+) + H2O + H(+). Catalyzes the pyrimidine ring opening between N-3 and C-4 by an unusual flavin hydroperoxide-catalyzed mechanism, adding oxygen atoms in the process to yield ureidoacrylate peracid, that immediately reacts with FMN forming ureidoacrylate and FMN-N(5)-oxide. The FMN-N(5)-oxide reacts spontaneously with NADH to produce FMN. Requires the flavin reductase RutF to regenerate FMN in vivo. The polypeptide is Pyrimidine monooxygenase RutA (Escherichia coli (strain SMS-3-5 / SECEC)).